Reading from the N-terminus, the 105-residue chain is Protein LITTLE ZIPPER 2 (105 aa).

The interval 1–20 is disordered; the sequence is MCLTTSEPPFPDTDTPTMRS. Residues 39-60 are a coiled coil; sequence NLTRRRRLLKEQKEMEMRNLKL.

As to quaternary structure, interacts with REV.

Functionally, competitive inhibitor of the HD-ZIPIII transcription factors in shoot apical meristem (SAM) development. Acts by forming non-functional heterodimers. Part of a negative feedback loop. Essential for proper functioning of stem cells in the SAM. In Arabidopsis thaliana (Mouse-ear cress), this protein is Protein LITTLE ZIPPER 2.